Here is a 544-residue protein sequence, read N- to C-terminus: CTP synthase (544 aa).

Residues 1 to 266 (MTRFVFITGG…DREVLRHFNL (266 aa)) form an amidoligase domain region. Ser13 contributes to the CTP binding site. Ser13 lines the UTP pocket. 14-19 (SLGKGI) serves as a coordination point for ATP. Tyr54 lines the L-glutamine pocket. ATP is bound at residue Asp71. Asp71 and Glu140 together coordinate Mg(2+). Residues 147 to 149 (DIE), 187 to 192 (KTKPTQ), and Lys223 each bind CTP. UTP-binding positions include 187-192 (KTKPTQ) and Lys223. Residues 292–543 (KIAIVGKYIT…VAAAVRQARL (252 aa)) enclose the Glutamine amidotransferase type-1 domain. Gly354 is a binding site for L-glutamine. Cys381 acts as the Nucleophile; for glutamine hydrolysis in catalysis. L-glutamine contacts are provided by residues 382–385 (FGMQ), Glu405, and Arg471. Catalysis depends on residues His516 and Glu518.

It belongs to the CTP synthase family. Homotetramer.

It catalyses the reaction UTP + L-glutamine + ATP + H2O = CTP + L-glutamate + ADP + phosphate + 2 H(+). It carries out the reaction L-glutamine + H2O = L-glutamate + NH4(+). The enzyme catalyses UTP + NH4(+) + ATP = CTP + ADP + phosphate + 2 H(+). The protein operates within pyrimidine metabolism; CTP biosynthesis via de novo pathway; CTP from UDP: step 2/2. With respect to regulation, allosterically activated by GTP, when glutamine is the substrate; GTP has no effect on the reaction when ammonia is the substrate. The allosteric effector GTP functions by stabilizing the protein conformation that binds the tetrahedral intermediate(s) formed during glutamine hydrolysis. Inhibited by the product CTP, via allosteric rather than competitive inhibition. In terms of biological role, catalyzes the ATP-dependent amination of UTP to CTP with either L-glutamine or ammonia as the source of nitrogen. Regulates intracellular CTP levels through interactions with the four ribonucleotide triphosphates. The sequence is that of CTP synthase from Granulibacter bethesdensis (strain ATCC BAA-1260 / CGDNIH1).